The chain runs to 350 residues: Guanine nucleotide-binding protein G(t) subunit alpha (350 aa).

Residues 1–21 form a disordered region; that stretch reads MGAGASAEEKHSRELEKKLKE. Residue Gly-2 is the site of N-myristoyl glycine attachment. Basic and acidic residues predominate over residues 7–21; it reads AEEKHSRELEKKLKE. In terms of domain architecture, G-alpha spans 28-350; that stretch reads RTVKLLLLGA…KENLKDCGLF (323 aa). Residues 31–44 form a G1 motif region; it reads KLLLLGAGESGKST. Residues 36–43, 171–177, 196–200, 265–268, and Ala-322 each bind GTP; these read GAGESGKS, LRSRVKT, DVGGQ, and NKKD. Residues Ser-43 and Thr-177 each coordinate Mg(2+). Residues 169–177 form a G2 motif region; the sequence is DVLRSRVKT. The interval 192–201 is G3 motif; the sequence is FRMFDVGGQR. Residues 261–268 form a G4 motif region; sequence VLFLNKKD. The tract at residues 320-325 is G5 motif; the sequence is TCATDT.

It belongs to the G-alpha family. G(i/o/t/z) subfamily. As to quaternary structure, g proteins are composed of 3 units; alpha, beta and gamma. The alpha chain contains the guanine nucleotide binding site.

Its function is as follows. Guanine nucleotide-binding proteins (G proteins) are involved as modulators or transducers in various transmembrane signaling systems. Transducin is an amplifier and one of the transducers of a visual impulse that performs the coupling between rhodopsin and cGMP-phosphodiesterase. In Xenopus laevis (African clawed frog), this protein is Guanine nucleotide-binding protein G(t) subunit alpha (gnat).